Reading from the N-terminus, the 439-residue chain is Hemagglutinin-esterase (439 aa).

An N-terminal signal peptide occupies residues 1–22 (MGRMCIAMAPRTLLLLIGCQLV). The interval 12–132 (TLLLLIGCQL…DNNKWMGNKA (121 aa)) is esterase domain 1. At 23 to 407 (FGFNEPINIV…PVCLYDPLPV (385 aa)) the chain is on the virion surface side. Residue Ser45 is the Nucleophile of the active site. Cysteines 49 and 70 form a disulfide. N-linked (GlcNAc...) asparagine; by host glycosylation occurs at Asn94. A disulfide bond links Cys118 and Cys167. The interval 133 to 281 (RFYALLYKKM…GNYKAVSLEY (149 aa)) is receptor binding. Asn196, Asn246, Asn309, and Asn316 each carry an N-linked (GlcNAc...) asparagine; by host glycan. 2 disulfides stabilise this stretch: Cys202-Cys291 and Cys210-Cys264. Residues 282 to 395 (LLTIPSKAIC…HCPTAANIGY (114 aa)) are esterase domain 2. A disulfide bond links Cys322 and Cys327. Residue Asn331 is glycosylated (N-linked (GlcNAc...) asparagine; by host). Residues Asp342 and His345 each act as charge relay system in the active site. N-linked (GlcNAc...) asparagine; by host glycosylation is found at Asn360 and Asn374. The cysteines at positions 363 and 387 are disulfide-linked. A helical transmembrane segment spans residues 408–428 (ILLGVLLGIAVLIIVFLILYF). Residues 429–439 (MADSSVRLHEA) lie on the Intravirion side of the membrane.

It belongs to the influenza type C/coronaviruses hemagglutinin-esterase family. As to quaternary structure, homodimer; disulfide-linked. Forms a complex with the M protein in the pre-Golgi. Associates then with S-M complex to form a ternary complex S-M-HE. In terms of processing, N-glycosylated in the host RER.

Its subcellular location is the virion membrane. It is found in the host cell membrane. The enzyme catalyses N-acetyl-9-O-acetylneuraminate + H2O = N-acetylneuraminate + acetate + H(+). The catalysed reaction is N-acetyl-4-O-acetylneuraminate + H2O = N-acetylneuraminate + acetate + H(+). Its function is as follows. Structural protein that makes short spikes at the surface of the virus. Contains receptor binding and receptor-destroying activities. Mediates de-O-acetylation of N-acetyl-4-O-acetylneuraminic acid, which is probably the receptor determinant recognized by the virus on the surface of erythrocytes and susceptible cells. This receptor-destroying activity is important for virus release as it probably helps preventing self-aggregation and ensures the efficient spread of the progeny virus from cell to cell. May serve as a secondary viral attachment protein for initiating infection, the spike protein being the major one. May become a target for both the humoral and the cellular branches of the immune system. The chain is Hemagglutinin-esterase from Rat coronavirus (strain 681) (RCV-SDAV).